The primary structure comprises 496 residues: MTRVTRDFRDSLQRDGVPAVSADVKFASSRFPNYRIGANDQIFDVKDDPKVMSMKEVVARETAQLMDQQKRLSVRDLAHKFEKGLAAAAKLSEEAKLKEATSLEKHVLLKKLRDALESLRGRVAGRNKDDVEEAIAMVEALAVQLTQREGELFIEKAEVKKLASFLKQASEDAKKLVDEERAFARAEIESARAAVQRVEEALREHEQMSRASGKQDMEDLMKEVQEARRIKMLHQPSRVMDMEYELRALRNQLAEKSKHFLQLQKKLAMCRKSEENISLVYEIDGTEALGSCLRVRPCSNDAPDLSKCTIQWYRSSSDGSKKELISGATKSVYAPEPFDVGRVLHADIIYDGHSLSLSTVGKIDPAAGLGSYVEALVRKHDVDFNVVVTQMSGEDHTSESIHLFHVGKMRIKLCKGKTVIAKEYYSSAMQLCGVRGGGNAAAQALYWQAKKGVSFVIAFESERERNAAIMLARRFACDCNVTLAGPEDRTETGQSP.

Positions 126-269 (RNKDDVEEAI…FLQLQKKLAM (144 aa)) form a coiled coil.

Belongs to the SCAB family. In terms of assembly, dimer. Dimerization is required for actin-binding activity. Expressed in roots, stems, leaves, flowers, siliques and guard cells.

The protein localises to the cytoplasm. It is found in the cytoskeleton. Plant-specific actin binding protein that bundles and stabilizes microfilaments (MFs). Has no nucleation or capping activity. Regulates MF reorganization during stomatal closure. The binding to F-actin is insensitive to Ca(2+) and pH. Binds weakly to inositol phosphates. The protein is Stomatal closure-related actin-binding protein 1 of Arabidopsis thaliana (Mouse-ear cress).